A 127-amino-acid chain; its full sequence is Small ribosomal subunit protein uS11 (127 aa).

Belongs to the universal ribosomal protein uS11 family. As to quaternary structure, part of the 30S ribosomal subunit. Interacts with proteins S7 and S18. Binds to IF-3.

Its function is as follows. Located on the platform of the 30S subunit, it bridges several disparate RNA helices of the 16S rRNA. Forms part of the Shine-Dalgarno cleft in the 70S ribosome. The chain is Small ribosomal subunit protein uS11 from Streptococcus gordonii (strain Challis / ATCC 35105 / BCRC 15272 / CH1 / DL1 / V288).